The sequence spans 566 residues: Arginine--tRNA ligase (566 aa).

The 'HIGH' region signature appears at 123–133; that stretch reads PNIAKPFHIGH.

This sequence belongs to the class-I aminoacyl-tRNA synthetase family. Monomer.

It is found in the cytoplasm. It carries out the reaction tRNA(Arg) + L-arginine + ATP = L-arginyl-tRNA(Arg) + AMP + diphosphate. This chain is Arginine--tRNA ligase, found in Halothermothrix orenii (strain H 168 / OCM 544 / DSM 9562).